We begin with the raw amino-acid sequence, 910 residues long: DNA mismatch repair protein MutS (910 aa).

The segment covering 1 to 11 (MEAKVEEKEPE) has biased composition (basic and acidic residues). The tract at residues 1-21 (MEAKVEEKEPEPVENAGPDAP) is disordered. 658 to 665 (GPNMGGKS) lines the ATP pocket.

The protein belongs to the DNA mismatch repair MutS family.

Its function is as follows. This protein is involved in the repair of mismatches in DNA. It is possible that it carries out the mismatch recognition step. This protein has a weak ATPase activity. The chain is DNA mismatch repair protein MutS from Brucella abortus (strain 2308).